The following is a 387-amino-acid chain: Probable tRNA sulfurtransferase (387 aa).

The THUMP domain maps to 67–167 (SLLKNLFTRL…KEHFLIISES (101 aa)). ATP-binding positions include 185–186 (LL), 210–211 (TF), Arg-269, Gly-287, and Gln-296.

Belongs to the ThiI family.

It localises to the cytoplasm. It catalyses the reaction [ThiI sulfur-carrier protein]-S-sulfanyl-L-cysteine + a uridine in tRNA + 2 reduced [2Fe-2S]-[ferredoxin] + ATP + H(+) = [ThiI sulfur-carrier protein]-L-cysteine + a 4-thiouridine in tRNA + 2 oxidized [2Fe-2S]-[ferredoxin] + AMP + diphosphate. The catalysed reaction is [ThiS sulfur-carrier protein]-C-terminal Gly-Gly-AMP + S-sulfanyl-L-cysteinyl-[cysteine desulfurase] + AH2 = [ThiS sulfur-carrier protein]-C-terminal-Gly-aminoethanethioate + L-cysteinyl-[cysteine desulfurase] + A + AMP + 2 H(+). It participates in cofactor biosynthesis; thiamine diphosphate biosynthesis. In terms of biological role, catalyzes the ATP-dependent transfer of a sulfur to tRNA to produce 4-thiouridine in position 8 of tRNAs, which functions as a near-UV photosensor. Also catalyzes the transfer of sulfur to the sulfur carrier protein ThiS, forming ThiS-thiocarboxylate. This is a step in the synthesis of thiazole, in the thiamine biosynthesis pathway. The sulfur is donated as persulfide by IscS. The polypeptide is Probable tRNA sulfurtransferase (Mycoplasma pneumoniae (strain ATCC 29342 / M129 / Subtype 1) (Mycoplasmoides pneumoniae)).